Consider the following 844-residue polypeptide: Protein translocase subunit SecA (844 aa).

ATP is bound by residues Gln-89, 107-111 (GEGKT), and Asp-497. Zn(2+) is bound by residues Cys-829, Cys-831, Cys-840, and His-841.

Belongs to the SecA family. As to quaternary structure, monomer and homodimer. Part of the essential Sec protein translocation apparatus which comprises SecA, SecYEG and auxiliary proteins SecDF. Other proteins may also be involved. It depends on Zn(2+) as a cofactor.

Its subcellular location is the cell membrane. It localises to the cytoplasm. It carries out the reaction ATP + H2O + cellular proteinSide 1 = ADP + phosphate + cellular proteinSide 2.. Its function is as follows. Part of the Sec protein translocase complex. Interacts with the SecYEG preprotein conducting channel. Has a central role in coupling the hydrolysis of ATP to the transfer of proteins into and across the cell membrane, serving as an ATP-driven molecular motor driving the stepwise translocation of polypeptide chains across the membrane. This Streptococcus suis (strain 98HAH33) protein is Protein translocase subunit SecA.